The primary structure comprises 214 residues: 3,4-dihydroxy-2-butanone 4-phosphate synthase (214 aa).

D-ribulose 5-phosphate is bound by residues 37-38 (RE), aspartate 42, 150-154 (RRGHT), and glutamate 174. Glutamate 38 contributes to the Mg(2+) binding site. Position 153 (histidine 153) interacts with Mg(2+).

The protein belongs to the DHBP synthase family. As to quaternary structure, homodimer. It depends on Mg(2+) as a cofactor. Mn(2+) serves as cofactor.

It carries out the reaction D-ribulose 5-phosphate = (2S)-2-hydroxy-3-oxobutyl phosphate + formate + H(+). The protein operates within cofactor biosynthesis; riboflavin biosynthesis; 2-hydroxy-3-oxobutyl phosphate from D-ribulose 5-phosphate: step 1/1. Catalyzes the conversion of D-ribulose 5-phosphate to formate and 3,4-dihydroxy-2-butanone 4-phosphate. The polypeptide is 3,4-dihydroxy-2-butanone 4-phosphate synthase (Nitratidesulfovibrio vulgaris (strain ATCC 29579 / DSM 644 / CCUG 34227 / NCIMB 8303 / VKM B-1760 / Hildenborough) (Desulfovibrio vulgaris)).